A 286-amino-acid polypeptide reads, in one-letter code: MSIQHFRVALIPFFAAFCLPVFAHPETLVKVKDAEDQLGARVGYIELDLNSGKILESFRPEERFPMMSTFKVLLCGAVLSRVDAGQEQLGRRIHYSQNDLVEYSPVTEKHLTDGMTVRELCSAAITMSDNTAANLLLTTIGGPKELTAFLHNMGDHVTRLDRWEPELNEAIPNDERDTTMPAAMATTLRKLLTGELLTLASRQQLIDWMEADKVAGPLLRSALPAGWFIADKSGAGERGSRGIIAALGPDGKPSRIVVIYTTGSQATMDERNRQIAEIGASLIKHW.

Positions 1–23 are cleaved as a signal peptide; that stretch reads MSIQHFRVALIPFFAAFCLPVFA. Ser68 functions as the Acyl-ester intermediate in the catalytic mechanism. Cysteines 75 and 121 form a disulfide. The active-site Proton acceptor is Glu166. Substrate is bound at residue 232 to 234; sequence KSG.

The protein belongs to the class-A beta-lactamase family.

The catalysed reaction is a beta-lactam + H2O = a substituted beta-amino acid. Its function is as follows. TEM-type are the most prevalent beta-lactamases in enterobacteria; they hydrolyze the beta-lactam bond in susceptible beta-lactam antibiotics, thus conferring resistance to penicillins and cephalosporins. TEM-3 and TEM-4 are capable of hydrolyzing cefotaxime and ceftazidime. TEM-5 is capable of hydrolyzing ceftazidime. TEM-6 is capable of hydrolyzing ceftazidime and aztreonam. TEM-8/CAZ-2, TEM-16/CAZ-7 and TEM-24/CAZ-6 are markedly active against ceftazidime. IRT-4 shows resistance to beta-lactamase inhibitors. The chain is Beta-lactamase TEM (bla) from Escherichia coli.